Reading from the N-terminus, the 180-residue chain is Acireductone dioxygenase (180 aa).

Fe(2+) is bound by residues H97, H99, E103, and H141. 4 residues coordinate Ni(2+): H97, H99, E103, and H141.

It belongs to the acireductone dioxygenase (ARD) family. In terms of assembly, monomer. It depends on Fe(2+) as a cofactor. Ni(2+) serves as cofactor.

It catalyses the reaction 1,2-dihydroxy-5-(methylsulfanyl)pent-1-en-3-one + O2 = 3-(methylsulfanyl)propanoate + CO + formate + 2 H(+). The catalysed reaction is 1,2-dihydroxy-5-(methylsulfanyl)pent-1-en-3-one + O2 = 4-methylsulfanyl-2-oxobutanoate + formate + 2 H(+). It participates in amino-acid biosynthesis; L-methionine biosynthesis via salvage pathway; L-methionine from S-methyl-5-thio-alpha-D-ribose 1-phosphate: step 5/6. Its function is as follows. Catalyzes 2 different reactions between oxygen and the acireductone 1,2-dihydroxy-3-keto-5-methylthiopentene (DHK-MTPene) depending upon the metal bound in the active site. Fe-containing acireductone dioxygenase (Fe-ARD) produces formate and 2-keto-4-methylthiobutyrate (KMTB), the alpha-ketoacid precursor of methionine in the methionine recycle pathway. Ni-containing acireductone dioxygenase (Ni-ARD) produces methylthiopropionate, carbon monoxide and formate, and does not lie on the methionine recycle pathway. The protein is Acireductone dioxygenase of Yersinia pseudotuberculosis serotype O:3 (strain YPIII).